The primary structure comprises 377 residues: Glutamate 5-kinase (377 aa).

Lysine 22 contacts ATP. The substrate site is built by serine 62, aspartate 149, and asparagine 161. Residues 181–182 (TD) and 223–229 (TGGMVTK) contribute to the ATP site. Residues 285-359 (QGTLVADSGA…GRNTAQLKRF (75 aa)) form the PUA domain.

It belongs to the glutamate 5-kinase family.

The protein localises to the cytoplasm. The enzyme catalyses L-glutamate + ATP = L-glutamyl 5-phosphate + ADP. It participates in amino-acid biosynthesis; L-proline biosynthesis; L-glutamate 5-semialdehyde from L-glutamate: step 1/2. Catalyzes the transfer of a phosphate group to glutamate to form L-glutamate 5-phosphate. This chain is Glutamate 5-kinase, found in Bifidobacterium adolescentis (strain ATCC 15703 / DSM 20083 / NCTC 11814 / E194a).